The sequence spans 207 residues: ATP-dependent Clp protease proteolytic subunit (207 aa).

Serine 111 serves as the catalytic Nucleophile. The active site involves histidine 136.

The protein belongs to the peptidase S14 family. As to quaternary structure, fourteen ClpP subunits assemble into 2 heptameric rings which stack back to back to give a disk-like structure with a central cavity, resembling the structure of eukaryotic proteasomes.

The protein resides in the cytoplasm. It carries out the reaction Hydrolysis of proteins to small peptides in the presence of ATP and magnesium. alpha-casein is the usual test substrate. In the absence of ATP, only oligopeptides shorter than five residues are hydrolyzed (such as succinyl-Leu-Tyr-|-NHMec, and Leu-Tyr-Leu-|-Tyr-Trp, in which cleavage of the -Tyr-|-Leu- and -Tyr-|-Trp bonds also occurs).. In terms of biological role, cleaves peptides in various proteins in a process that requires ATP hydrolysis. Has a chymotrypsin-like activity. Plays a major role in the degradation of misfolded proteins. This Aliivibrio fischeri (strain ATCC 700601 / ES114) (Vibrio fischeri) protein is ATP-dependent Clp protease proteolytic subunit.